Here is a 294-residue protein sequence, read N- to C-terminus: Elongation factor Ts (294 aa).

Residues T82–V85 form an involved in Mg(2+) ion dislocation from EF-Tu region.

Belongs to the EF-Ts family.

The protein resides in the cytoplasm. Associates with the EF-Tu.GDP complex and induces the exchange of GDP to GTP. It remains bound to the aminoacyl-tRNA.EF-Tu.GTP complex up to the GTP hydrolysis stage on the ribosome. The chain is Elongation factor Ts from Psychrobacter arcticus (strain DSM 17307 / VKM B-2377 / 273-4).